The primary structure comprises 271 residues: Thiazole synthase (271 aa).

Lys95 serves as the catalytic Schiff-base intermediate with DXP. 1-deoxy-D-xylulose 5-phosphate contacts are provided by residues Gly156, 182–183 (AG), and 204–205 (NT).

This sequence belongs to the ThiG family. As to quaternary structure, homotetramer. Forms heterodimers with either ThiH or ThiS.

The protein resides in the cytoplasm. The catalysed reaction is [ThiS sulfur-carrier protein]-C-terminal-Gly-aminoethanethioate + 2-iminoacetate + 1-deoxy-D-xylulose 5-phosphate = [ThiS sulfur-carrier protein]-C-terminal Gly-Gly + 2-[(2R,5Z)-2-carboxy-4-methylthiazol-5(2H)-ylidene]ethyl phosphate + 2 H2O + H(+). Its pathway is cofactor biosynthesis; thiamine diphosphate biosynthesis. Its function is as follows. Catalyzes the rearrangement of 1-deoxy-D-xylulose 5-phosphate (DXP) to produce the thiazole phosphate moiety of thiamine. Sulfur is provided by the thiocarboxylate moiety of the carrier protein ThiS. In vitro, sulfur can be provided by H(2)S. The sequence is that of Thiazole synthase from Yersinia pseudotuberculosis serotype O:3 (strain YPIII).